Consider the following 169-residue polypeptide: Cytochrome c oxidase subunit 4 isoform 1, mitochondrial (169 aa).

The N-terminal 22 residues, 1–22 (MLASRALSLIGKRAISTSVCLR), are a transit peptide targeting the mitochondrion. The Mitochondrial matrix portion of the chain corresponds to 23–99 (AHGSVVKSED…FAEMNRGTNE (77 aa)). At Lys-29 the chain carries N6-acetyllysine; alternate. Lys-29 is subject to N6-succinyllysine; alternate. Residues Ser-56 and Ser-58 each carry the phosphoserine modification. Lys-60 is subject to N6-acetyllysine; alternate. Residue Lys-60 is modified to N6-succinyllysine; alternate. An N6-acetyllysine modification is found at Lys-67. Residues 100-125 (WKTVVGMAMFFIGFTALVLIWEKSYV) form a helical membrane-spanning segment. Residues 126 to 169 (YGPIPHTFDRDWVAMQTKRMLDMKANPIQGFSAKWDYDKNEWKK) are Mitochondrial intermembrane-facing.

The protein belongs to the cytochrome c oxidase IV family. As to quaternary structure, component of the cytochrome c oxidase (complex IV, CIV), a multisubunit enzyme composed of 14 subunits. The complex is composed of a catalytic core of 3 subunits MT-CO1, MT-CO2 and MT-CO3, encoded in the mitochondrial DNA, and 11 supernumerary subunits COX4I, COX5A, COX5B, COX6A, COX6B, COX6C, COX7A, COX7B, COX7C, COX8 and NDUFA4, which are encoded in the nuclear genome. The complex exists as a monomer or a dimer and forms supercomplexes (SCs) in the inner mitochondrial membrane with NADH-ubiquinone oxidoreductase (complex I, CI) and ubiquinol-cytochrome c oxidoreductase (cytochrome b-c1 complex, complex III, CIII), resulting in different assemblies (supercomplex SCI(1)III(2)IV(1) and megacomplex MCI(2)III(2)IV(2)). Interacts with PHB2; the interaction decreases in absence of SPHK2. Interacts with AFG1L. Interacts with ABCB7; this interaction allows the regulation of cellular iron homeostasis and cellular reactive oxygen species (ROS) levels in cardiomyocytes. Interacts with FLVCR2; this interaction occurs in the absence of heme and is disrupted upon heme binding. Interacts with IRGC.

The protein localises to the mitochondrion inner membrane. The protein operates within energy metabolism; oxidative phosphorylation. In terms of biological role, component of the cytochrome c oxidase, the last enzyme in the mitochondrial electron transport chain which drives oxidative phosphorylation. The respiratory chain contains 3 multisubunit complexes succinate dehydrogenase (complex II, CII), ubiquinol-cytochrome c oxidoreductase (cytochrome b-c1 complex, complex III, CIII) and cytochrome c oxidase (complex IV, CIV), that cooperate to transfer electrons derived from NADH and succinate to molecular oxygen, creating an electrochemical gradient over the inner membrane that drives transmembrane transport and the ATP synthase. Cytochrome c oxidase is the component of the respiratory chain that catalyzes the reduction of oxygen to water. Electrons originating from reduced cytochrome c in the intermembrane space (IMS) are transferred via the dinuclear copper A center (CU(A)) of subunit 2 and heme A of subunit 1 to the active site in subunit 1, a binuclear center (BNC) formed by heme A3 and copper B (CU(B)). The BNC reduces molecular oxygen to 2 water molecules using 4 electrons from cytochrome c in the IMS and 4 protons from the mitochondrial matrix. The sequence is that of Cytochrome c oxidase subunit 4 isoform 1, mitochondrial (Cox4i1) from Mus musculus (Mouse).